The sequence spans 235 residues: Transmembrane emp24 domain-containing protein 9 (235 aa).

The signal sequence occupies residues 1 to 37 (MAAVRGVRVVGTSPGLLLGRGMRAFLLLLCLAARGGA). Over 38–202 (LYFHIGETEK…RQTSESTNQR (165 aa)) the chain is Lumenal. The GOLD domain occupies 47–145 (KKCFIEEIPD…MLRVHLDIQV (99 aa)). Residues 121–160 (CLHSNSTKFSLFAGGMLRVHLDIQVGEHANDYAEIAAKDK) are required for interaction with STX17. An N-linked (GlcNAc...) asparagine glycan is attached at asparagine 125. Residues 154–184 (EIAAKDKLSELQLRVRQLVEQVEQIQKEQNY) are a coiled coil. Lysine 160 is subject to N6-acetyllysine. The helical transmembrane segment at 203 to 222 (VLWWSILQTLILVAIGVWQM) threads the bilayer. Over 223 to 235 (RHLKSFFEAKKLV) the chain is Cytoplasmic. Positions 228–229 (FF) match the COPII vesicle coat-binding motif. Positions 228 to 235 (FFEAKKLV) match the COPI vesicle coat-binding motif.

It belongs to the EMP24/GP25L family. Monomer and homodimer in endoplasmic reticulum. Predominantly monomeric and to lesser extent homodimeric in endoplasmic reticulum-Golgi intermediate compartment and cis-Golgi network. Probably oligomerizes with other members of the EMP24/GP25L family such as TMED2, TMED7 and TMED10. Interacts with TMED5. Interacts (via C-terminus) with COPG1; the interaction involves dimeric TMED9. Interacts with PTPN2 and SPAST. Interacts with STX17; the interaction is direct. In terms of processing, N-linked glycosylated containing high mannose.

The protein resides in the endoplasmic reticulum membrane. The protein localises to the golgi apparatus. It is found in the cis-Golgi network membrane. It localises to the endoplasmic reticulum-Golgi intermediate compartment membrane. Its subcellular location is the trans-Golgi network membrane. Functionally, appears to be involved in vesicular protein trafficking, mainly in the early secretory pathway. In COPI vesicle-mediated retrograde transport involved in the coatomer recruitment to membranes of the early secretory pathway. Increases coatomer-dependent activity of ARFGAP2. Thought to play a crucial role in the specific retention of p24 complexes in cis-Golgi membranes; specifically contributes to the coupled localization of TMED2 and TMED10 in the cis-Golgi network. May be involved in organization of intracellular membranes, such as of the ER-Golgi intermediate compartment and the Golgi apparatus. Involved in ER localization of PTPN2. This is Transmembrane emp24 domain-containing protein 9 (Tmed9) from Rattus norvegicus (Rat).